Here is a 587-residue protein sequence, read N- to C-terminus: Deoxynucleoside triphosphate triphosphohydrolase sahd-1 (587 aa).

The HD domain occupies Arg-92–Leu-262. Positions 95, 134, 135, and 257 each coordinate Zn(2+). The tract at residues Glu-554–Ser-587 is disordered. The residue at position 558 (Thr-558) is a Phosphothreonine.

This sequence belongs to the SAMHD1 family. As to quaternary structure, homodimer. Homotetramer; in dGTP-bound form. Requires Zn(2+) as cofactor.

It is found in the nucleus. It localises to the chromosome. The enzyme catalyses a 2'-deoxyribonucleoside 5'-triphosphate + H2O = a 2'-deoxyribonucleoside + triphosphate + H(+). Allosterically activated and regulated by GTP or dGTP. Allosteric activation promotes the formation of highly active homotetramers. Phosphorylation impairs homotetramerization, thereby inhibiting dNTPase activity. Functionally, has deoxynucleoside triphosphate (dNTPase) activity. dNTPase activity acts as a regulator of DNA precursor pools by regulating dNTP pools. Phosphorylation acts as a switch to control dNTPase-dependent and -independent functions. This Caenorhabditis elegans protein is Deoxynucleoside triphosphate triphosphohydrolase sahd-1.